The primary structure comprises 78 residues: Large ribosomal subunit protein bL28 (78 aa).

Residues 1 to 23 (MSRVCQVTGKKPMVGNNRSHAKN) form a disordered region.

The protein belongs to the bacterial ribosomal protein bL28 family.

The sequence is that of Large ribosomal subunit protein bL28 from Shewanella sediminis (strain HAW-EB3).